Here is a 212-residue protein sequence, read N- to C-terminus: Abscisic acid receptor PYL10 (212 aa).

The START-like stretch occupies residues 34 to 191 (YAVGPGQCSS…NLQKLKSVSE (158 aa)). Residues lysine 70, 107 to 112 (ASTSTE), 134 to 140 (RLRNYRS), and glutamate 156 contribute to the abscisate site. Positions 103 to 107 (SGLPA) match the Gate loop motif. The short motif at 133–135 (HRL) is the Latch loop element.

The protein belongs to the PYR/PYL/RCAR abscisic acid intracellular receptor family. In terms of assembly, homodimer. Interacts with PP2C53. Binding to PP2C53 is dependent on the presence of abscisic acid (ABA). Interacts with PP2C50. Binding to PP2C50 is dependent on the presence of ABA.

Its subcellular location is the cytoplasm. The protein localises to the cytosol. It is found in the nucleus. Inhibits the protein phosphatases PP2C06 and PP2C09 when activated by abscisic acid (ABA). Together with PP2C53, SAPK8 and SAPK10, may form an ABA signaling module involved in stress response. The sequence is that of Abscisic acid receptor PYL10 from Oryza sativa subsp. japonica (Rice).